A 422-amino-acid chain; its full sequence is Putative FBD-associated F-box protein At1g55030 (422 aa).

Positions 8–60 constitute an F-box domain; it reads TDMISQLPEPLILQILGSLPTKVAITTSVLSKQWQSHWKMMPKLEFDSFLRRL. LRR repeat units follow at residues 132–153, 154–175, and 180–201; these read TLETLELILNVVMDVPPSVYLK, SLKTLYLLAVDFKDDESVINLL, and NLQDLVMRRNSSSNVKTFTIAV. Residues 342–391 enclose the FBD domain; sequence EWNQPKNVPECLHHLEKFIWEGYKWKREEIEVAKYILKNTNRLKRAIFSL.

The sequence is that of Putative FBD-associated F-box protein At1g55030 from Arabidopsis thaliana (Mouse-ear cress).